A 1088-amino-acid chain; its full sequence is Exportin-T (1088 aa).

The segment covering 435 to 503 (KNNNNKNKNT…VKNANNIKNN (69 aa)) has biased composition (low complexity). 2 disordered regions span residues 435–513 (KNNN…DDDD) and 1059–1088 (LNNNNNINNNNNNINNNGHTNGNGVNKNGH).

This sequence belongs to the exportin family.

Its subcellular location is the nucleus. It is found in the cytoplasm. Its function is as follows. Mediates the nuclear export of aminoacylated tRNAs. This is Exportin-T (xpot) from Dictyostelium discoideum (Social amoeba).